The sequence spans 913 residues: E3 ubiquitin-protein ligase ZNRF3 (913 aa).

The disordered stretch occupies residues 1 to 32 (MRPRSGGRPGAPGRRRRRLRRGPRGRRLPPPP). Residues 1–52 (MRPRSGGRPGAPGRRRRRLRRGPRGRRLPPPPPLPLLLGLLLAAAGPGAARA) form the signal peptide. Residues 13 to 27 (GRRRRRLRRGPRGRR) are compositionally biased toward basic residues. The Extracellular segment spans residues 53-216 (KETAFVEVVL…PRQPTEYFDM (164 aa)). The helical transmembrane segment at 217–237 (GIFLAFFVVVSLVCLILLVKI) threads the bilayer. Residues 238-913 (KLKQRRSQNS…GSGPGIGTGA (676 aa)) lie on the Cytoplasmic side of the membrane. An RING-type; atypical zinc finger spans residues 290-331 (CAICLEKYIDGEELRVIPCTHRFHRKCVDPWLLQHHTCPHCR). Disordered regions lie at residues 601 to 669 (AVHL…GLEV) and 855 to 913 (REEE…GTGA). Composition is skewed to polar residues over residues 634 to 664 (SGDQ…STSE) and 881 to 890 (ASLSSAPQDT). A compositionally biased stretch (gly residues) spans 903 to 913 (PGSGPGIGTGA).

This sequence belongs to the ZNRF3 family. In terms of assembly, interacts with LRP6, FZD4, FZD5, FZD6 and FZD8. Interacts with RSPO1; interaction promotes indirect interaction with LGR4 and membrane clearance of ZNRF3. Interacts with LMBR1L.

The protein localises to the cell membrane. The enzyme catalyses S-ubiquitinyl-[E2 ubiquitin-conjugating enzyme]-L-cysteine + [acceptor protein]-L-lysine = [E2 ubiquitin-conjugating enzyme]-L-cysteine + N(6)-ubiquitinyl-[acceptor protein]-L-lysine.. It functions in the pathway protein modification; protein ubiquitination. With respect to regulation, negatively regulated by R-spondin proteins such as RSPO1: interaction with RSPO1 induces the indirect association between ZNRF3 and LGR4, promoting membrane clearance of ZNRF3. Its function is as follows. E3 ubiquitin-protein ligase that acts as a negative regulator of the Wnt signaling pathway by mediating the ubiquitination and subsequent degradation of Wnt receptor complex components Frizzled and LRP6. Acts on both canonical and non-canonical Wnt signaling pathway. Acts as a tumor suppressor in the intestinal stem cell zone by inhibiting the Wnt signaling pathway, thereby restricting the size of the intestinal stem cell zone. Along with RSPO2 and RNF43, constitutes a master switch that governs limb specification. In Mus musculus (Mouse), this protein is E3 ubiquitin-protein ligase ZNRF3 (Znrf3).